Reading from the N-terminus, the 105-residue chain is Multidrug resistance protein EbrA (105 aa).

Helical transmembrane passes span 2-22 (IAGY…AAML), 35-55 (VLVV…LQVI), 60-80 (SYAT…VLWF), and 87-104 (RNIA…LINL).

It belongs to the drug/metabolite transporter (DMT) superfamily. Small multidrug resistance (SMR) (TC 2.A.7.1) family. EbrA/EbrB subfamily. As to quaternary structure, the efflux pump is composed of EbrA and EbrB.

The protein resides in the cell membrane. In terms of biological role, part of a multidrug efflux pump. Confers resistance to cationic lipophilic dyes such as ethidium bromide, acriflavine, pyronine Y and safranin O. The efflux is probably coupled to an influx of protons. In Bacillus licheniformis (strain ATCC 14580 / DSM 13 / JCM 2505 / CCUG 7422 / NBRC 12200 / NCIMB 9375 / NCTC 10341 / NRRL NRS-1264 / Gibson 46), this protein is Multidrug resistance protein EbrA (ebrA).